The sequence spans 338 residues: MREPAFWHRPPSLLSRLLLPFGAVYGEVTAARMQKVGIETGVPVLCVGNYHLGGAGKTPTTLALVQLLRDLGEHPVVLSRGYGGRLRGPILVDAKRHSAADVGDEPLMMARTAPVVVARERTDGAALARSQGASVIVMDDGFQNPALVKDASLIVIDSRRGVGNGCVFPAGPLRAPLPLQVARTDVMIIVGDGQAADAVAAQIAARGGPVLRARLAPDETSLERLKGRRVLAFAGIGDPARFFATLRASGVEIAEQRAFPDHHPFTADELASLADSARRGGLTLVTTEKDLARIGPDAASLGSDLVALAVTLVVEEEARLRRFLLERINQARTKQFAR.

51-58 is an ATP binding site; that stretch reads HLGGAGKT.

Belongs to the LpxK family.

It carries out the reaction a lipid A disaccharide + ATP = a lipid IVA + ADP + H(+). It functions in the pathway glycolipid biosynthesis; lipid IV(A) biosynthesis; lipid IV(A) from (3R)-3-hydroxytetradecanoyl-[acyl-carrier-protein] and UDP-N-acetyl-alpha-D-glucosamine: step 6/6. Its function is as follows. Transfers the gamma-phosphate of ATP to the 4'-position of a tetraacyldisaccharide 1-phosphate intermediate (termed DS-1-P) to form tetraacyldisaccharide 1,4'-bis-phosphate (lipid IVA). The sequence is that of Tetraacyldisaccharide 4'-kinase from Rhodopseudomonas palustris (strain BisB5).